Here is a 515-residue protein sequence, read N- to C-terminus: Protein DETOXIFICATION 32 (515 aa).

Positions 1 to 26 (METLNVDHEDTISSEQEHRAHTKSDT) are enriched in basic and acidic residues. Positions 1–30 (METLNVDHEDTISSEQEHRAHTKSDTDMPP) are disordered. The next 12 helical transmembrane spans lie at 48–68 (LWWLAGPAIFTSFCQYSLGAV), 90–110 (VISGFSVGIMLGMGSALATLC), 131–151 (IILNSCALLLCLFYVFATPLL), 167–187 (FSLWMIPQLFAYAVNFATAKF), 194–214 (VIAMAVIAATVLLQHTLLSWL), 225–245 (GGAVVLNMSWWLIDVTQIVYI), 276–296 (AVMVCLEVWYFMALILFAGYL), 303–323 (VAALSICMNILGWPIMVAFGF), 347–367 (LIVAMITSVSIGIVISVTLIV), 392–412 (LLALTIVINNIQPVLSGVAVG), 418–438 (IVAYVNIGCYYLCGIPIGLVL), and 448–468 (GIWTGMLTGTVVQTSVLLFII). A compositionally biased stretch (basic and acidic residues) spans 488 to 497 (GDQSNKREEI). The tract at residues 488-515 (GDQSNKREEIDLCEEDENNSNGENNHRK) is disordered. The span at 506–515 (NSNGENNHRK) shows a compositional bias: low complexity.

Belongs to the multi antimicrobial extrusion (MATE) (TC 2.A.66.1) family.

It localises to the membrane. In Arabidopsis thaliana (Mouse-ear cress), this protein is Protein DETOXIFICATION 32.